The following is a 366-amino-acid chain: Chorismate synthase (366 aa).

NADP(+) is bound by residues R48 and R54. Residues R125–S127, N238–A239, G278, K293–S297, and R319 each bind FMN.

Belongs to the chorismate synthase family. As to quaternary structure, homotetramer. FMNH2 is required as a cofactor.

The catalysed reaction is 5-O-(1-carboxyvinyl)-3-phosphoshikimate = chorismate + phosphate. It participates in metabolic intermediate biosynthesis; chorismate biosynthesis; chorismate from D-erythrose 4-phosphate and phosphoenolpyruvate: step 7/7. Functionally, catalyzes the anti-1,4-elimination of the C-3 phosphate and the C-6 proR hydrogen from 5-enolpyruvylshikimate-3-phosphate (EPSP) to yield chorismate, which is the branch point compound that serves as the starting substrate for the three terminal pathways of aromatic amino acid biosynthesis. This reaction introduces a second double bond into the aromatic ring system. The polypeptide is Chorismate synthase (Cellvibrio japonicus (strain Ueda107) (Pseudomonas fluorescens subsp. cellulosa)).